Reading from the N-terminus, the 227-residue chain is Small ribosomal subunit protein uS3m (227 aa).

Belongs to the universal ribosomal protein uS3 family. As to quaternary structure, component of the mitochondrial small ribosomal subunit (mt-SSU). Mature yeast 74S mitochondrial ribosomes consist of a small (37S) and a large (54S) subunit. The 37S small subunit contains a 15S ribosomal RNA (15S mt-rRNA) and at least 32 different proteins. The 54S large subunit contains a 21S rRNA (21S mt-rRNA) and at least 45 different proteins. uS3m, uS4m and uS5m form the narrow entry site of the mRNA channel.

The protein localises to the mitochondrion. Essential for mitochondrial protein synthesis and required for the maturation of small ribosomal subunits. Its function is as follows. Component of the mitochondrial ribosome (mitoribosome), a dedicated translation machinery responsible for the synthesis of mitochondrial genome-encoded proteins, including at least some of the essential transmembrane subunits of the mitochondrial respiratory chain. The mitoribosomes are attached to the mitochondrial inner membrane and translation products are cotranslationally integrated into the membrane. uS3m is essential for mitochondrial protein synthesis and required for the maturation of small ribosomal subunits. This chain is Small ribosomal subunit protein uS3m (var1), found in Schizosaccharomyces pombe (strain 972 / ATCC 24843) (Fission yeast).